The sequence spans 391 residues: Recombination and repair protein (391 aa).

60 to 67 is an ATP binding site; it reads GPSKSFKS. The span at 364 to 374 shows a compositional bias: basic and acidic residues; that stretch reads KSPESKSKSAA. The segment at 364–391 is disordered; the sequence is KSPESKSKSAADLETDLEQLSDMEEFNE. Acidic residues predominate over residues 376–391; it reads LETDLEQLSDMEEFNE.

The protein belongs to the RecA family.

In terms of biological role, important in genetic recombination, DNA repair, and replication. Possesses pairing and strand-transfer activity. Interacts with dda and gene 32 proteins. The polypeptide is Recombination and repair protein (UVSX) (Enterobacteria phage T4 (Bacteriophage T4)).